The following is a 648-amino-acid chain: Threonine--tRNA ligase (648 aa).

The TGS domain occupies 1–61 (MIKITFPNTS…NENASVKLYK (61 aa)). The catalytic stretch occupies residues 243–542 (DHRRIGKEME…MIEHTGGKFP (300 aa)). Zn(2+) is bound by residues cysteine 338, histidine 389, and histidine 519.

This sequence belongs to the class-II aminoacyl-tRNA synthetase family. Homodimer. Zn(2+) is required as a cofactor.

It localises to the cytoplasm. The catalysed reaction is tRNA(Thr) + L-threonine + ATP = L-threonyl-tRNA(Thr) + AMP + diphosphate + H(+). Functionally, catalyzes the attachment of threonine to tRNA(Thr) in a two-step reaction: L-threonine is first activated by ATP to form Thr-AMP and then transferred to the acceptor end of tRNA(Thr). Also edits incorrectly charged L-seryl-tRNA(Thr). The chain is Threonine--tRNA ligase from Azobacteroides pseudotrichonymphae genomovar. CFP2.